Consider the following 330-residue polypeptide: DNA-directed RNA polymerase subunit alpha (330 aa).

An alpha N-terminal domain (alpha-NTD) region spans residues 1-237 (MYTEINEMLT…RQLHAFVDMK (237 aa)). Residues 251–330 (FDPVLLRSVD…ENWPPASLGE (80 aa)) form an alpha C-terminal domain (alpha-CTD) region.

This sequence belongs to the RNA polymerase alpha chain family. In terms of assembly, homodimer. The RNAP catalytic core consists of 2 alpha, 1 beta, 1 beta' and 1 omega subunit. When a sigma factor is associated with the core the holoenzyme is formed, which can initiate transcription.

It catalyses the reaction RNA(n) + a ribonucleoside 5'-triphosphate = RNA(n+1) + diphosphate. Functionally, DNA-dependent RNA polymerase catalyzes the transcription of DNA into RNA using the four ribonucleoside triphosphates as substrates. The sequence is that of DNA-directed RNA polymerase subunit alpha from Legionella pneumophila (strain Paris).